The following is a 329-amino-acid chain: ATP-dependent (S)-NAD(P)H-hydrate dehydratase (329 aa).

The N-terminal 28 residues, 1–28 (MALGPGCRAVRGCRPVLKRAFSLHKAHS), are a transit peptide targeting the mitochondrion. A YjeF C-terminal domain is found at 35 to 326 (ILQLVRSVVP…AEVGPAFRRL (292 aa)). Lys-49 carries the N6-acetyllysine modification. Tyr-67 carries the post-translational modification Phosphotyrosine. Residues Gly-135 and 188–194 (NHVEFGR) each bind (6S)-NADPHX. ATP contacts are provided by residues 228–232 (KGEQD) and 247–256 (GSGRRCGGQG). Asp-257 provides a ligand contact to (6S)-NADPHX.

This sequence belongs to the NnrD/CARKD family. Mg(2+) serves as cofactor.

The protein localises to the mitochondrion. The enzyme catalyses (6S)-NADHX + ATP = ADP + phosphate + NADH + H(+). It carries out the reaction (6S)-NADPHX + ATP = ADP + phosphate + NADPH + H(+). Catalyzes the dehydration of the S-form of NAD(P)HX at the expense of ATP, which is converted to ADP. Together with NAD(P)HX epimerase, which catalyzes the epimerization of the S- and R-forms, the enzyme allows the repair of both epimers of NAD(P)HX, a damaged form of NAD(P)H that is a result of enzymatic or heat-dependent hydration. This Bos taurus (Bovine) protein is ATP-dependent (S)-NAD(P)H-hydrate dehydratase.